Reading from the N-terminus, the 328-residue chain is Ubiquitin carboxyl-terminal hydrolase isozyme L5 (328 aa).

Residues 7–225 (EWCLMESDPG…IRFNLMAIVS (219 aa)) form the UCH catalytic domain. The residue at position 47 (K47) is an N6-succinyllysine. C88 acts as the Nucleophile in catalysis. Position 158 is an N6-acetyllysine (K158). H164 (proton donor) is an active-site residue. K288 carries the N6-succinyllysine modification. Residues 290–318 (NYLPFIMELLKTLAEHQQLIPLVEKAKEK) form the ULD domain. The tract at residues 312-328 (VEKAKEKQNAKKAQETK) is interaction with ADRM1.

Belongs to the peptidase C12 family. As to quaternary structure, component of the 19S (PA700) regulatory complex of the 26S proteasome. Interacts with ADRM1 and NFRKB. Component of the INO80 complex; specifically part of a complex module associated with N-terminus of INO80.

It is found in the cytoplasm. The protein resides in the nucleus. The catalysed reaction is Thiol-dependent hydrolysis of ester, thioester, amide, peptide and isopeptide bonds formed by the C-terminal Gly of ubiquitin (a 76-residue protein attached to proteins as an intracellular targeting signal).. Its activity is regulated as follows. Activated by ADRM1. Inhibited by interaction with NFRKB. Protease that specifically cleaves 'Lys-48'-linked polyubiquitin chains. Deubiquitinating enzyme associated with the 19S regulatory subunit of the 26S proteasome. Putative regulatory component of the INO80 complex; however is inactive in the INO80 complex and is activated by a transient interaction of the INO80 complex with the proteasome via ADRM1. This is Ubiquitin carboxyl-terminal hydrolase isozyme L5 (UCHL5) from Bos taurus (Bovine).